Here is a 790-residue protein sequence, read N- to C-terminus: Eukaryotic translation initiation factor 3 subunit C (790 aa).

A disordered region spans residues Met-1 to Phe-62. The span at Ser-14 to Asp-53 shows a compositional bias: acidic residues. The PCI domain maps to Phe-556–Ser-728. The disordered stretch occupies residues Asn-748–Phe-790. A compositionally biased stretch (polar residues) spans Thr-751–Ser-770.

The protein belongs to the eIF-3 subunit C family. In terms of assembly, component of the eukaryotic translation initiation factor 3 (eIF-3) complex.

The protein resides in the cytoplasm. Functionally, component of the eukaryotic translation initiation factor 3 (eIF-3) complex, which is involved in protein synthesis of a specialized repertoire of mRNAs and, together with other initiation factors, stimulates binding of mRNA and methionyl-tRNAi to the 40S ribosome. The eIF-3 complex specifically targets and initiates translation of a subset of mRNAs involved in cell proliferation. In Lodderomyces elongisporus (strain ATCC 11503 / CBS 2605 / JCM 1781 / NBRC 1676 / NRRL YB-4239) (Yeast), this protein is Eukaryotic translation initiation factor 3 subunit C.